A 499-amino-acid polypeptide reads, in one-letter code: 2,3-bisphosphoglycerate-independent phosphoglycerate mutase (499 aa).

The Mn(2+) site is built by aspartate 10 and serine 60. Serine 60 (phosphoserine intermediate) is an active-site residue. Substrate contacts are provided by residues histidine 121, 151-152 (RD), arginine 182, arginine 188, 253-256 (RPDR), and lysine 326. Mn(2+)-binding residues include aspartate 391, histidine 395, aspartate 434, histidine 435, and histidine 452.

It belongs to the BPG-independent phosphoglycerate mutase family. As to quaternary structure, monomer. Requires Mn(2+) as cofactor.

The catalysed reaction is (2R)-2-phosphoglycerate = (2R)-3-phosphoglycerate. Its pathway is carbohydrate degradation; glycolysis; pyruvate from D-glyceraldehyde 3-phosphate: step 3/5. In terms of biological role, catalyzes the interconversion of 2-phosphoglycerate and 3-phosphoglycerate. The chain is 2,3-bisphosphoglycerate-independent phosphoglycerate mutase from Metamycoplasma hominis (strain ATCC 23114 / DSM 25592 / NBRC 14850 / NCTC 10111 / PG21) (Mycoplasma hominis).